A 99-amino-acid polypeptide reads, in one-letter code: Malonate decarboxylase acyl carrier protein (99 aa).

An O-(phosphoribosyl dephospho-coenzyme A)serine modification is found at S25.

The protein belongs to the MdcC family. Covalently binds the prosthetic group of malonate decarboxylase.

It localises to the cytoplasm. Functionally, subunit of malonate decarboxylase, it is an acyl carrier protein to which acetyl and malonyl thioester residues are bound via a 2'-(5''-phosphoribosyl)-3'-dephospho-CoA prosthetic group and turn over during the catalytic mechanism. This Pseudomonas syringae pv. syringae (strain B728a) protein is Malonate decarboxylase acyl carrier protein.